Reading from the N-terminus, the 695-residue chain is MALFLVALLAFLSLGSGCHHRLCHCSNGVFLCQDSKVTEMPSDLPRDAVELRFVLTKLRVIPEGAFSGFGDLEKIEISQNDVLEVIEANVFSNLPKLHEIRIEKANNLLYIDPDAFQNLPNLRYLLISNTGIKHLPAVHKIQSLQKVLLDIQDNINIHTVERNSFMGLSFESMIVWLSKNGIQEIHNCAFNGTQLDELNLSDNSNLEELPNDVFQGASGPVILDISRTRIRSLPSYGLENLKKLRAKSTYHLKKLPSLEKFVTLVEASLTYPSHCCAFANWRRQTSDLHPICNKSILRQEVDDMTQARGQRISLAEDDEPSYAKGFDMMYSEFDYDLCSEVVDVTCSPEPDAFNPCEDIMGYDILRVLIWFISILAITGNILVLVILITSQYKLTVPRFLMCNLAFADLCIGIYLLLIASVDVHTKSQYHNYAIDWQTGAGCDAAGFFTVFASELSVYTLTAITLERWHTITHAMQLECKVHVRHAASIMLVGWVFAFAVALFPIFGISSYMKVSICLPMDIDSPLSQLYVMSLLVLNVLAFVVICGCYTHIYLTVRNPNITSSSSDTKIAKRMAMLIFTDFLCMAPISFFAISASLKVPLITVSKSKILLVLFYPINSCANPFLYAIFTRNFRRDFFILLSKFGCYEVQAQTYRSETSFTAHNFHPRNGHCPPAPRVTNGSNYTLIPLRHLAKN.

A signal peptide spans 1–17 (MALFLVALLAFLSLGSG). Disulfide bonds link Cys18–Cys25 and Cys23–Cys32. Positions 18–46 (CHHRLCHCSNGVFLCQDSKVTEMPSDLPR) constitute an LRRNT domain. At 18-366 (CHHRLCHCSN…EDIMGYDILR (349 aa)) the chain is on the extracellular side. LRR repeat units lie at residues 48-70 (AVEL…SGFG), 71-93 (DLEK…VFSN), 96-118 (KLHE…AFQN), 121-142 (NLRY…HKIQ), 143-167 (SLQK…SFMG), 171-192 (ESMI…AFNG), 194-216 (QLDE…VFQG), 219-239 (GPVI…YGLE), and 240-262 (NLKK…EKFV). N-linked (GlcNAc...) asparagine glycosylation is found at Asn191 and Asn199. Disulfide bonds link Cys275–Cys346, Cys276–Cys292, Cys276–Cys356, and Cys292–Cys338. A glycan (N-linked (GlcNAc...) asparagine) is linked at Asn293. Tyr335 bears the Sulfotyrosine mark. A helical transmembrane segment spans residues 367-387 (VLIWFISILAITGNILVLVIL). At 388 to 398 (ITSQYKLTVPR) the chain is on the cytoplasmic side. The chain crosses the membrane as a helical span at residues 399–421 (FLMCNLAFADLCIGIYLLLIASV). The Extracellular portion of the chain corresponds to 422–443 (DVHTKSQYHNYAIDWQTGAGCD). The cysteines at positions 442 and 517 are disulfide-linked. Residues 444 to 465 (AAGFFTVFASELSVYTLTAITL) form a helical membrane-spanning segment. The Cytoplasmic segment spans residues 466–485 (ERWHTITHAMQLECKVHVRH). The helical transmembrane segment at 486 to 508 (AASIMLVGWVFAFAVALFPIFGI) threads the bilayer. Residues 509–528 (SSYMKVSICLPMDIDSPLSQ) are Extracellular-facing. Residues 529-550 (LYVMSLLVLNVLAFVVICGCYT) form a helical membrane-spanning segment. Over 551–573 (HIYLTVRNPNITSSSSDTKIAKR) the chain is Cytoplasmic. A helical membrane pass occupies residues 574-597 (MAMLIFTDFLCMAPISFFAISASL). Residues 598 to 608 (KVPLITVSKSK) are Extracellular-facing. The chain crosses the membrane as a helical span at residues 609-630 (ILLVLFYPINSCANPFLYAIFT). Topologically, residues 631 to 695 (RNFRRDFFIL…LIPLRHLAKN (65 aa)) are cytoplasmic.

It belongs to the G-protein coupled receptor 1 family. FSH/LSH/TSH subfamily. As to quaternary structure, homotrimer. Functions as a homotrimer binding the FSH hormone heterodimer composed of CGA and FSHB. Interacts with ARRB2. Interacts with APPL2; interaction is independent of follicle stimulating hormone stimulation. Post-translationally, N-glycosylated; indirectly required for FSH-binding, possibly via a conformational change that allows high affinity binding of hormone. Sulfated. As to expression, isoform FSH-R3 is expressed in ovary and testis, but not in kidney (at protein level).

The protein resides in the cell membrane. In terms of biological role, g protein-coupled receptor for follitropin, the follicle-stimulating hormone. The activity of isoform FSH-R1 is mediated by G proteins which activate adenylate cyclase. Isoform FSH-R2 and isoform FSH-R3 also bind FSH, but this does not result in activation of adenylate cyclase. Isoform FSH-R3 may be involved in calcium signaling. Through cAMP production activates the downstream PI3K-AKT and ERK1/ERK2 signaling pathways. This is Follicle-stimulating hormone receptor (FSHR) from Ovis aries (Sheep).